Consider the following 1410-residue polypeptide: Condensin-1 complex subunit CAP-D2 (1410 aa).

Over residues 469-480 (LEPTEHASKEST) the composition is skewed to basic and acidic residues. Disordered regions lie at residues 469 to 492 (LEPT…DGEI), 504 to 525 (HQDS…EKDV), 860 to 879 (KTKK…NLEA), and 1208 to 1410 (KEQE…GSRS). A compositionally biased stretch (polar residues) spans 869–879 (ESQNTEENLEA). Residues 1208–1226 (KEQEETARNAEVHREKTKT) are compositionally biased toward basic and acidic residues. Composition is skewed to acidic residues over residues 1240 to 1284 (PVEE…EEPD) and 1306 to 1319 (IETE…DSEP). Polar residues predominate over residues 1323-1339 (QCGTTNPRSLNRKTSGD). Acidic residues predominate over residues 1342–1365 (IETESEEEQSDSEEEPSDSEEEPD). Polar residues predominate over residues 1368 to 1379 (QCGTTNPRSLNQ).

It belongs to the CND1 (condensin subunit 1) family. In terms of assembly, component of the condensin complex. Present in buds.

Its subcellular location is the chromosome. It localises to the nucleus. Essential protein. Regulatory subunit of the condensin complex, a complex required for conversion of interphase chromatin into mitotic-like condense chromosomes. The condensin complex probably introduces positive supercoils into relaxed DNA in the presence of type I topoisomerases and converts nicked DNA into positive knotted forms in the presence of type II topoisomerases. Required for fertility, growth and euchromatin organization, but not for sister chromatid cohesion. Necessary to maintain normal structural integrity of the meiotic chromosomes during the two nuclear divisions of gametogenesis, especially to maintain compaction of the centromeric repeats and 45S rDNA. Also seems to be involved in crossover formation during meiotic prophase I. Prevents centromeric and pericentromeric heterochromatin repeats association. Contributes to the induction of stress-responsive genes in response to stress treatment. This Arabidopsis thaliana (Mouse-ear cress) protein is Condensin-1 complex subunit CAP-D2.